Consider the following 299-residue polypeptide: Superkiller complex protein 8 (299 aa).

WD repeat units lie at residues 11-48, 54-93, 96-135, 138-177, 180-219, 223-263, and 266-299; these read AHEDGIWCVKWQGDIIATGGMGTKVKTWHGNQPQFLTE, KHILGVTSLDIDIGARYLATGGMDGTVRLFDLSTNTLHKT, SGPLGCLKIGFLNSANNLVSVSESGNISIYSVETGEKLRS, NTNKQVLTMAISPNNEQIAVAGLDGTVLCYDVESGRRVSE, AHGVPIRSLCFSSDSKTIFTGAEDSQIRLHDPNSSNPYIA, GHSS…LDSS, and AHADQTWDLAFSPDSTKLVSVSDDCSIHSYALKQ.

Belongs to the SKI8 family.

The sequence is that of Superkiller complex protein 8 (skic8) from Dictyostelium discoideum (Social amoeba).